Reading from the N-terminus, the 260-residue chain is Thiazole synthase (260 aa).

Catalysis depends on lysine 100, which acts as the Schiff-base intermediate with DXP. Residues glycine 161, 187 to 188 (AG), and 209 to 210 (NT) contribute to the 1-deoxy-D-xylulose 5-phosphate site.

Belongs to the ThiG family. In terms of assembly, homotetramer. Forms heterodimers with either ThiH or ThiS.

It is found in the cytoplasm. The enzyme catalyses [ThiS sulfur-carrier protein]-C-terminal-Gly-aminoethanethioate + 2-iminoacetate + 1-deoxy-D-xylulose 5-phosphate = [ThiS sulfur-carrier protein]-C-terminal Gly-Gly + 2-[(2R,5Z)-2-carboxy-4-methylthiazol-5(2H)-ylidene]ethyl phosphate + 2 H2O + H(+). Its pathway is cofactor biosynthesis; thiamine diphosphate biosynthesis. Its function is as follows. Catalyzes the rearrangement of 1-deoxy-D-xylulose 5-phosphate (DXP) to produce the thiazole phosphate moiety of thiamine. Sulfur is provided by the thiocarboxylate moiety of the carrier protein ThiS. In vitro, sulfur can be provided by H(2)S. This Dechloromonas aromatica (strain RCB) protein is Thiazole synthase.